The sequence spans 896 residues: Desmocollin-3 (896 aa).

Residues 1–31 form the signal peptide; that stretch reads MVVPEFRSPQCRALCTKLLLTLWVFSFVGEA. The propeptide occupies 32-135; that stretch reads CKKVTFHVPS…KETVLRRSKR (104 aa). Cadherin domains are found at residues 136–243, 244–355, 356–472, 473–580, and 581–691; these read RWAP…YPLF, TEAI…APTF, RQNT…GPEC, KPPE…EIIQ, and DYIV…TLGK. Residues 136-695 are Extracellular-facing; it reads RWAPIPCSMQ…GITLGKWAIL (560 aa). N-linked (GlcNAc...) asparagine glycosylation is present at asparagine 166. N-linked (GlcNAc...) asparagine glycans are attached at residues asparagine 392 and asparagine 547. The N-linked (GlcNAc...) (high mannose) asparagine glycan is linked to asparagine 630. The helical transmembrane segment at 696–716 threads the bilayer; that stretch reads AILLGIALLFSVLLTLVCGVV. The Cytoplasmic segment spans residues 717 to 896; sequence TARKGKHFPE…LTLAETCTKR (180 aa).

In terms of assembly, may form homodimers. Interacts with DSG1; there is evidence to suggest that the interaction promotes cell-cell adhesion of keratinocytes. Expressed in the basal layers of epidermal stratified epithelia from birth (at protein level).

Its subcellular location is the cell membrane. The protein localises to the cell junction. It is found in the desmosome. It localises to the cytoplasm. A component of desmosome cell-cell junctions which are required for positive regulation of cellular adhesion. Required for cell-cell adhesion in the epidermis, as a result required for the maintenance of the dermal cohesion and the dermal barrier function. Required for cell-cell adhesion of epithelial cell layers surrounding the telogen hair club, as a result plays an important role in telogen hair shaft anchorage. Essential for successful completion of embryo compaction and development beyond the 8-cell stage. This Mus musculus (Mouse) protein is Desmocollin-3 (Dsc3).